Reading from the N-terminus, the 352-residue chain is C-glycoside deglycosidase alpha subunit (352 aa).

Glutamate 147 contacts Mn(2+). Catalysis depends on histidine 149, which acts as the Proton acceptor. The Mn(2+) site is built by aspartate 179, histidine 269, and glutamate 305.

This sequence belongs to the C-glycoside deglycosidase alpha subunit family. In terms of assembly, heterodimer composed of an alpha subunit (CarB2) and a beta subunit (CarC2). The cofactor is a divalent metal cation.

The enzyme catalyses 3''-dehydroorientin = 1,5-anhydro-D-erythro-hex-1-en-3-ulose + luteolin. Activity is strongly reduced in the presence of chelating agents. In terms of biological role, carbon-carbon bond-cleaving enzyme which participates in the metabolism of C-glycosides. Acts on the C8-glycosylated compound 3''-dehydroorientin (3''-oxo-orientin). The polypeptide is C-glycoside deglycosidase alpha subunit (Arthrobacter globiformis (strain ATCC 8010 / DSM 20124 / JCM 1332 / NBRC 12137 / NCIMB 8907 / NRRL B-2979 / 168)).